The following is a 295-amino-acid chain: Ribosomal protein L11 methyltransferase (295 aa).

S-adenosyl-L-methionine is bound by residues T145, G166, D188, and N230.

The protein belongs to the methyltransferase superfamily. PrmA family.

The protein resides in the cytoplasm. The catalysed reaction is L-lysyl-[protein] + 3 S-adenosyl-L-methionine = N(6),N(6),N(6)-trimethyl-L-lysyl-[protein] + 3 S-adenosyl-L-homocysteine + 3 H(+). Its function is as follows. Methylates ribosomal protein L11. The protein is Ribosomal protein L11 methyltransferase of Pectobacterium atrosepticum (strain SCRI 1043 / ATCC BAA-672) (Erwinia carotovora subsp. atroseptica).